We begin with the raw amino-acid sequence, 97 residues long: Sorbitol dehydrogenase (97 aa).

Cys44 provides a ligand contact to Zn(2+). Tyr50 lines the substrate pocket. Zn(2+) is bound by residues His69 and Glu70.

Belongs to the zinc-containing alcohol dehydrogenase family. In terms of assembly, homotetramer. Zn(2+) serves as cofactor.

The protein localises to the mitochondrion membrane. It localises to the cell projection. The protein resides in the cilium. Its subcellular location is the flagellum. It carries out the reaction xylitol + NAD(+) = D-xylulose + NADH + H(+). It catalyses the reaction L-iditol + NAD(+) = keto-L-sorbose + NADH + H(+). The catalysed reaction is keto-D-fructose + NADH + H(+) = D-sorbitol + NAD(+). In terms of biological role, polyol dehydrogenase that catalyzes the reversible NAD(+)-dependent oxidation of various sugar alcohols. Is active with xylitol, L-iditol and D-sorbitol (D-glucitol) as substrates, leading to the C2-oxidized products D-xylulose, L-sorbose and D-fructose, respectively. Is a key enzyme in the polyol pathway that interconverts glucose and fructose via sorbitol, which constitutes an important alternate route for glucose metabolism. May play a role in sperm motility by using sorbitol as an alternative energy source for sperm motility. This Sus scrofa (Pig) protein is Sorbitol dehydrogenase (SORD).